The sequence spans 84 residues: Toxin To5 (84 aa).

The N-terminal stretch at 1–19 (MKAIIFFIGCLMLIDLVAG) is a signal peptide. The 62-residue stretch at 21–82 (RSGYPVTQKG…IWGSYPNNCG (62 aa)) folds into the LCN-type CS-alpha/beta domain. Disulfide bonds link Cys-31-Cys-81, Cys-35-Cys-57, Cys-43-Cys-62, and Cys-47-Cys-64. Cys-81 bears the Cysteine amide mark.

In terms of tissue distribution, expressed by the venom gland.

The protein resides in the secreted. In terms of biological role, beta toxins bind voltage-independently at site-4 of sodium channels (Nav) and shift the voltage of activation toward more negative potentials thereby affecting sodium channel activation and promoting spontaneous and repetitive firing. The chain is Toxin To5 from Tityus obscurus (Amazonian scorpion).